A 242-amino-acid chain; its full sequence is Universal stress protein PHOS32 (242 aa).

A chloroplast-targeting transit peptide spans 1 to 43 (MNPADSDHPQLPNIKIHHPPSPRHSHHHHSSSTPSSAATPTPT). Positions 1-45 (MNPADSDHPQLPNIKIHHPPSPRHSHHHHSSSTPSSAATPTPTAG) are disordered. Basic residues predominate over residues 15 to 30 (KIHHPPSPRHSHHHHS). P19 serves as a coordination point for ATP. Position 21 is a phosphoserine; by MAPK3 and MAPK6 (S21). A compositionally biased stretch (low complexity) spans 31-44 (SSTPSSAATPTPTA). Residues V83, 168 to 178 (GSRGFGAEKKR), and 186 to 188 (SVS) each bind ATP. S219 is modified (phosphoserine).

This sequence belongs to the universal stress protein A family. In terms of processing, phosphorylated by MAPK3 and MAPK6 after pathogenic elicitation (e.g. bacterial flg22, Phytophthora infestans zoospores and xylanase).

It is found in the plastid. Its subcellular location is the chloroplast. The polypeptide is Universal stress protein PHOS32 (Arabidopsis thaliana (Mouse-ear cress)).